Consider the following 296-residue polypeptide: GTPase Era (296 aa).

In terms of domain architecture, Era-type G spans 3-170 (KSGFVTIVGR…KELMFKYIPE (168 aa)). The interval 11–18 (GRPNVGKS) is G1. 11-18 (GRPNVGKS) is a binding site for GTP. The tract at residues 37-41 (QTTRN) is G2. Residues 58 to 61 (DTPG) are G3. GTP contacts are provided by residues 58–62 (DTPGI) and 120–123 (NKID). The segment at 120 to 123 (NKID) is G4. Residues 149–151 (ISA) form a G5 region. A KH type-2 domain is found at 201-278 (LSEEVPHGIA…YIRLWVKVKE (78 aa)).

This sequence belongs to the TRAFAC class TrmE-Era-EngA-EngB-Septin-like GTPase superfamily. Era GTPase family. Monomer.

The protein localises to the cytoplasm. It is found in the cell membrane. Its function is as follows. An essential GTPase that binds both GDP and GTP, with rapid nucleotide exchange. Plays a role in 16S rRNA processing and 30S ribosomal subunit biogenesis and possibly also in cell cycle regulation and energy metabolism. The sequence is that of GTPase Era from Clostridium botulinum (strain Loch Maree / Type A3).